A 539-amino-acid polypeptide reads, in one-letter code: Serine/threonine-protein kinase BUR1 (539 aa).

The span at 1–15 (MEKLSETTPNGTSPR) shows a compositional bias: polar residues. The interval 1–27 (MEKLSETTPNGTSPRTFALNHSRPRSS) is disordered. In terms of domain architecture, Protein kinase spans 37-339 (YELLGKLGEG…AVDALQHPWF (303 aa)). ATP is bound by residues 43–51 (LGEGTFGEV) and lysine 66. Residue aspartate 169 is the Proton acceptor of the active site. The segment at 370-539 (AALPPAPKGG…DRPDHNGYRR (170 aa)) is disordered. Composition is skewed to basic and acidic residues over residues 414–428 (NGPD…RERG), 471–514 (NRDD…DRGT), and 521–539 (PRHD…GYRR).

The protein belongs to the protein kinase superfamily. CMGC Ser/Thr protein kinase family. CDC2/CDKX subfamily.

The protein localises to the nucleus. It carries out the reaction L-seryl-[protein] + ATP = O-phospho-L-seryl-[protein] + ADP + H(+). The enzyme catalyses L-threonyl-[protein] + ATP = O-phospho-L-threonyl-[protein] + ADP + H(+). It catalyses the reaction [DNA-directed RNA polymerase] + ATP = phospho-[DNA-directed RNA polymerase] + ADP + H(+). Serine/threonine-protein kinase involved in transcription regulation. Phosphorylates the UBC2/RAD6 ubiquitin-conjugating enzyme (E2), leading to monoubiquitination of histone H2B and the silencing of telomeric-associated genes. Also required for histone H3 methylation. Necessary for the recovery from pheromone-induced growth arrest in the cell cycle G1 phase. This chain is Serine/threonine-protein kinase BUR1 (BUR1), found in Gibberella zeae (strain ATCC MYA-4620 / CBS 123657 / FGSC 9075 / NRRL 31084 / PH-1) (Wheat head blight fungus).